Consider the following 148-residue polypeptide: Flavodoxin (148 aa).

The 142-residue stretch at 4 to 145 folds into the Flavodoxin-like domain; the sequence is VLILFGSSTG…AVSAFAEDVL (142 aa).

This sequence belongs to the flavodoxin family. It depends on FMN as a cofactor.

Functionally, low-potential electron donor to a number of redox enzymes. The chain is Flavodoxin from Desulfovibrio desulfuricans (strain ATCC 27774 / DSM 6949 / MB).